A 351-amino-acid polypeptide reads, in one-letter code: Beta-1,4-xylosyltransferase IRX9 (351 aa).

Over 1 to 16 (MGSLERSKKKAQVWKK) the chain is Cytoplasmic. A helical; Signal-anchor for type II membrane protein transmembrane segment spans residues 17 to 36 (AVIHFSLCFVMGFFTGFAPA). Residues 37 to 351 (GKASFFSNFE…KFPTRTRLST (315 aa)) are Lumenal-facing. N-linked (GlcNAc...) asparagine glycosylation is found at N64 and N74. The disordered stretch occupies residues 80–107 (SQSQAPAPAESREAEGETRSLSEKEDEN). Over residues 89-107 (ESREAEGETRSLSEKEDEN) the composition is skewed to basic and acidic residues. N271 and N287 each carry an N-linked (GlcNAc...) asparagine glycan.

This sequence belongs to the glycosyltransferase 43 family. In terms of tissue distribution, expressed in developing interfascicular fibers, primary and secondary xylem in stems and developing secondary xylem in roots.

Its subcellular location is the golgi apparatus membrane. The catalysed reaction is [(1-&gt;4)-beta-D-xylan](n) + UDP-alpha-D-xylose = [(1-&gt;4)-beta-D-xylan](n+1) + UDP + H(+). Its function is as follows. Involved in the synthesis of the hemicellulose glucuronoxylan, a major component of secondary cell walls. Xylan xylosyltransferase that acts cooperatively with IRX14 to achieve the successive addition of xylosyl residues during xylan backbone elongation. This chain is Beta-1,4-xylosyltransferase IRX9, found in Arabidopsis thaliana (Mouse-ear cress).